Consider the following 371-residue polypeptide: Cytochrome b (371 aa).

Helical transmembrane passes span 25–45 (FGSL…FLAI), 69–90 (WIMQ…YTHI), 105–125 (WLSG…GYVL), and 170–190 (FFAL…IHII). Residues His-75 and His-89 each contribute to the heme b site. Residues His-174 and His-188 each contribute to the heme b site. His-193 is a binding site for a ubiquinone. 4 helical membrane passes run 218 to 238 (YKDM…MTFA), 280 to 300 (LGGT…PFTH), 312 to 332 (LTQI…WTAT), and 339 to 358 (FIYI…IMNP).

The protein belongs to the cytochrome b family. In terms of assembly, the cytochrome bc1 complex contains 3 respiratory subunits (MT-CYB, CYC1 and UQCRFS1), 2 core proteins (UQCRC1 and UQCRC2) and probably 6 low-molecular weight proteins. Requires heme b as cofactor.

It localises to the mitochondrion inner membrane. Functionally, component of the ubiquinol-cytochrome c reductase complex (complex III or cytochrome b-c1 complex) that is part of the mitochondrial respiratory chain. The b-c1 complex mediates electron transfer from ubiquinol to cytochrome c. Contributes to the generation of a proton gradient across the mitochondrial membrane that is then used for ATP synthesis. The sequence is that of Cytochrome b (MT-CYB) from Micruroides euryxanthus (Sonoran coral snake).